Here is a 442-residue protein sequence, read N- to C-terminus: Proline--tRNA ligase (442 aa).

The protein belongs to the class-II aminoacyl-tRNA synthetase family. ProS type 2 subfamily. Homodimer.

The protein resides in the cytoplasm. It catalyses the reaction tRNA(Pro) + L-proline + ATP = L-prolyl-tRNA(Pro) + AMP + diphosphate. In terms of biological role, catalyzes the attachment of proline to tRNA(Pro) in a two-step reaction: proline is first activated by ATP to form Pro-AMP and then transferred to the acceptor end of tRNA(Pro). The chain is Proline--tRNA ligase from Brucella abortus (strain S19).